A 1186-amino-acid chain; its full sequence is Probable inactive serine/threonine-protein kinase DDB_G0293184 (1186 aa).

A compositionally biased stretch (acidic residues) spans 1 to 12 (MEQEDQQYEEDS). 2 disordered regions span residues 1–55 (MEQE…NNDS) and 99–122 (MEQQQQQQHLQPPLSPNSASNTNF). 2 stretches are compositionally biased toward low complexity: residues 34–48 (TTTEITTTTTTTTPT) and 99–110 (MEQQQQQQHLQP). A Protein kinase domain is found at 173 to 437 (YESPPTLGKY…VHDLLRHPWL (265 aa)). ATP contacts are provided by residues 179–187 (LGKYDKVIL) and K205. 2 disordered regions span residues 447-468 (SSSSSSQAHPTVQSNNLNGNVN) and 530-551 (YNNYNNNNNNNNNTNDNDNECG). Over residues 453–468 (QAHPTVQSNNLNGNVN) the composition is skewed to polar residues. Over residues 530-545 (YNNYNNNNNNNNNTND) the composition is skewed to low complexity. The stretch at 631–659 (LKRTNQMANDLGRKYEILQSNIKRLEDYL) forms a coiled coil. Polar residues predominate over residues 766–784 (NNLDPSNNNESVNLSTSPG). 2 disordered regions span residues 766-911 (NNLD…NGNN) and 959-988 (ENKKHQKQKSLDSTNKQSPGSLGGAGGDVS). Over residues 785 to 836 (SLVNSNSNPSISNSLNNNNNNNNNNNNNNNGNPNVIITTNNNCNSNSNGNNI) the composition is skewed to low complexity. The segment covering 847-896 (KEVKEGKEIKEIKEPKEKDKDKEKDKDKEKDKDKEKDKDKEKEKDKDKEN) has biased composition (basic and acidic residues). The stretch at 875 to 909 (EKDKDKEKDKDKEKEKDKDKENNNNNNSNNNNNNG) forms a coiled coil. Over residues 897 to 911 (NNNNNSNNNNNNGNN) the composition is skewed to low complexity. The segment covering 969-978 (LDSTNKQSPG) has biased composition (polar residues). The Rho-GAP domain occupies 1004–1186 (VRLDDLMTRE…LSFPKFNLSV (183 aa)).

It belongs to the protein kinase superfamily. STE Ser/Thr protein kinase family.

The protein is Probable inactive serine/threonine-protein kinase DDB_G0293184 of Dictyostelium discoideum (Social amoeba).